The chain runs to 331 residues: UPF0284 protein PF0303 (331 aa).

Belongs to the UPF0284 family.

The sequence is that of UPF0284 protein PF0303 from Pyrococcus furiosus (strain ATCC 43587 / DSM 3638 / JCM 8422 / Vc1).